The chain runs to 1331 residues: ABC multidrug transporter MDR2 (1331 aa).

Composition is skewed to basic and acidic residues over residues 1–20 (MVEVSEKPNTQDDGVSKQEN) and 31–41 (SDKEKVAKKGN). A disordered region spans residues 1–51 (MVEVSEKPNTQDDGVSKQENRNPASSSSSTSDKEKVAKKGNSDATKSSTPE). 4 helical membrane passes run 93–113 (MIFLAIVSLASIAAGAALPLF), 147–167 (YFVYLGIAQFILLYVSTVGFI), 219–239 (KVGLTLTALSTFFSAFIIGYV), and 242–262 (WKLALICSSTIVAMILVMGGI). The ABC transmembrane type-1 1 domain occupies 97 to 387 (AIVSLASIAA…VAPNTQAFAS (291 aa)). N-linked (GlcNAc...) asparagine glycosylation occurs at Asn293. The next 2 membrane-spanning stretches (helical) occupy residues 325–345 (LGIMFGSMMAIMYSNYGLGFW) and 358–378 (LSAIVNILLAIVIGSFSIGNV). An ABC transporter 1 domain is found at 422–667 (IEFRGIKHIY…KGTYLQLVEA (246 aa)). 457–464 (GPSGSGKS) contacts ATP. An N-linked (GlcNAc...) asparagine glycan is attached at Asn529. Helical transmembrane passes span 762 to 782 (LCGFFFAVLSGAGQPVQSVFF) and 810 to 830 (FLMLGLVQLVTQSAQGVIFAI). The region spanning 764–1051 (GFFFAVLSGA…VFSFSPDMGK (288 aa)) is the ABC transmembrane type-1 2 domain. N-linked (GlcNAc...) asparagine glycosylation is present at Asn860. 4 helical membrane-spanning segments follow: residues 884 to 904 (LGTILMVSTTLIVALTVALAF), 910 to 930 (LVCISTVPVLLLCGFYRFWIL), 995 to 1015 (ASQSFSFFCLALGFWYGGGLL), and 1025 to 1045 (FFLCISCVIFGSQSAGIVFSF). An ABC transporter 2 domain is found at 1086-1324 (IEFRDVHFRY…KGRYYELVHM (239 aa)). Residue Asn1108 is glycosylated (N-linked (GlcNAc...) asparagine). 1121 to 1128 (GPSGCGKS) lines the ATP pocket.

This sequence belongs to the ABC transporter superfamily. ABCB family. Multidrug resistance exporter (TC 3.A.1.201) subfamily.

The protein resides in the cell membrane. It carries out the reaction itraconazole(in) + ATP + H2O = itraconazole(out) + ADP + phosphate + H(+). Pleiotropic ABC efflux transporter that may be involved in the modulation susceptibility to a wide range of unrelated cytotoxic compounds, including terbinafine, 4-nitroquinoline N-oxide, and ethidium bromide. May play a role in pathogenicity. The chain is ABC multidrug transporter MDR2 from Trichophyton interdigitale (strain MR816).